The primary structure comprises 212 residues: MGRRSSKDRSITPDILLRAYSIGLFPMAESSDDPELFWVEPDLRGIIPLDSFHYSKSLAKIIRQKPFDIRFDTAFAAVLDKCAEPAPDRPSTWINQTIRDLYTALFQMGHAHSVEAFEGDELVGGLYGVSLGAAFFGESMFSRRSNASKICLVHLVERLRAQGFVLLDTQFTTEHLKTFGAIDVAKDEYSKMLEEAVTMANVPFLLPEEISP.

It belongs to the L/F-transferase family.

It localises to the cytoplasm. It carries out the reaction N-terminal L-lysyl-[protein] + L-leucyl-tRNA(Leu) = N-terminal L-leucyl-L-lysyl-[protein] + tRNA(Leu) + H(+). The enzyme catalyses N-terminal L-arginyl-[protein] + L-leucyl-tRNA(Leu) = N-terminal L-leucyl-L-arginyl-[protein] + tRNA(Leu) + H(+). It catalyses the reaction L-phenylalanyl-tRNA(Phe) + an N-terminal L-alpha-aminoacyl-[protein] = an N-terminal L-phenylalanyl-L-alpha-aminoacyl-[protein] + tRNA(Phe). Functions in the N-end rule pathway of protein degradation where it conjugates Leu, Phe and, less efficiently, Met from aminoacyl-tRNAs to the N-termini of proteins containing an N-terminal arginine or lysine. The chain is Leucyl/phenylalanyl-tRNA--protein transferase from Allorhizobium ampelinum (strain ATCC BAA-846 / DSM 112012 / S4) (Agrobacterium vitis (strain S4)).